We begin with the raw amino-acid sequence, 763 residues long: Thyrotropin receptor (763 aa).

A signal peptide spans 1–21 (MRPTPLLRLALFLVLPSSLGG). The Extracellular portion of the chain corresponds to 22 to 412 (ERCPSPPCEC…EFNPCEDIMG (391 aa)). A disulfide bond links Cys31 and Cys41. One copy of the LRR 1 repeat lies at 51-74 (PPSTQTLKFIETHLKTIPSRAFSN). N-linked (GlcNAc...) asparagine glycans are attached at residues Asn77 and Asn99. 5 LRR repeats span residues 125–150 (LPLLKFLGIFNTGLRVFPDLTKIYST), 151–174 (DVFFILEITDNPYMTSIPANAFQG), 176–199 (CNETLTLKLYNNGFTSIQGHAFNG), 201–223 (KLDAVYLNKNKYLTVIGQDAFAG), and 225–248 (YSGPTLLDISYTSVTALPSKGLEH). Residues Asn177 and Asn198 are each glycosylated (N-linked (GlcNAc...) asparagine). N-linked (GlcNAc...) asparagine glycosylation occurs at Asn302. Sulfotyrosine is present on Tyr384. Residues 413–440 (YKFLRIVVWFVSLLALLGNVFVLVILLT) traverse the membrane as a helical segment. Topologically, residues 441–449 (SHYKLTVPR) are cytoplasmic. The helical transmembrane segment at 450–472 (FLMCNLAFADFCMGLYLLLIASV) threads the bilayer. At 473–493 (DLYTQSEYYNHAIDWQTGPGC) the chain is on the extracellular side. The cysteines at positions 493 and 568 are disulfide-linked. A helical transmembrane segment spans residues 494 to 516 (NTAGFFTVFASELSVYTLTVITL). Residues 517 to 536 (ERWHAITFAMRLDRKIRLWH) lie on the Cytoplasmic side of the membrane. The chain crosses the membrane as a helical span at residues 537–559 (AYVIMLGGWVCCFLLALLPLVGI). Over 560–579 (SSYAKVSICLPMDTETPLAL) the chain is Extracellular. The chain crosses the membrane as a helical span at residues 580 to 601 (AYIILVLLLNIIAFIIVCACYV). The Cytoplasmic portion of the chain corresponds to 602–624 (KIYITVRNPHYNPGDKDTRIAKR). Residues 625–648 (MAVLIFTDFMCMAPISFYALSALM) traverse the membrane as a helical segment. Residues 649–659 (NKPLITVTNSK) lie on the Extracellular side of the membrane. A helical transmembrane segment spans residues 660 to 681 (ILLVLFYPLNSCANPFLYAIFT). Residues 682 to 763 (KAFQRDVFML…TSKEYKRTVL (82 aa)) lie on the Cytoplasmic side of the membrane. A disordered region spans residues 742–763 (ENSHLTPKQQDQTSKEYKRTVL). Residues 744–753 (SHLTPKQQDQ) show a composition bias toward polar residues. Over residues 754–763 (TSKEYKRTVL) the composition is skewed to basic and acidic residues. The PDZ-binding signature appears at 761–763 (TVL).

This sequence belongs to the G-protein coupled receptor 1 family. FSH/LSH/TSH subfamily. In terms of assembly, interacts with heterodimer GPHA2:GPHB5; this interaction stimulates cAMP production. Interacts (via the PDZ-binding motif) with SCRIB; regulates TSHR trafficking and function. In terms of processing, glycosylated. Sulfated. Sulfation on Tyr-384 plays a role in thyrotropin receptor binding and activation.

The protein localises to the cell membrane. It localises to the basolateral cell membrane. In terms of biological role, receptor for the thyroid-stimulating hormone (TSH) or thyrotropin. Also acts as a receptor for the heterodimeric glycoprotein hormone (GPHA2:GPHB5) or thyrostimulin. The activity of this receptor is mediated by G proteins which activate adenylate cyclase. Plays a central role in controlling thyroid cell metabolism. The sequence is that of Thyrotropin receptor (TSHR) from Bos taurus (Bovine).